The following is a 367-amino-acid chain: Probable butyrate kinase (367 aa).

Belongs to the acetokinase family.

It is found in the cytoplasm. It catalyses the reaction butanoate + ATP = butanoyl phosphate + ADP. This is Probable butyrate kinase from Bacillus cereus (strain Q1).